Here is a 527-residue protein sequence, read N- to C-terminus: Outer capsid protein VP5 (527 aa).

The interval 1–42 (MGKFIKQLSKFGKKVGGALTSNTAKKIYKTIGDTAVRFAESD) is involved in membrane permeabilization.

The protein belongs to the orbivirus VP5 family.

It is found in the virion. In terms of biological role, VP5 protein is one of the two proteins (with VP2) which constitute the virus particle outer capsid. Acts as a membrane permeabilization protein that mediates release of viral particles from endosomal compartments into the cytoplasm. Permeabilization activity is probably negatively regulated by VP2 and is triggered by endosomal degradation of VP2 and exposure to low pH. This chain is Outer capsid protein VP5 (Segment-6), found in Antilocapra americana (Pronghorn).